We begin with the raw amino-acid sequence, 463 residues long: NADH dehydrogenase [ubiquinone] iron-sulfur protein 2, mitochondrial (463 aa).

The N-terminal 33 residues, 1-33 (MAALRALCGFRGVAAQVLRPGAGVRLPIQPSRG), are a transit peptide targeting the mitochondrion. Position 62 is an N6-acetyllysine (K62). R118 bears the Symmetric dimethylarginine mark. Residues C326, C332, and C347 each coordinate [4Fe-4S] cluster.

It belongs to the complex I 49 kDa subunit family. In terms of assembly, core subunit of respiratory chain NADH dehydrogenase (Complex I) which is composed of 45 different subunits. Component of the iron-sulfur (IP) fragment of the enzyme. Interacts with NDUFAF3. Interacts with NDUFAF7. Interacts with CERS2. Requires [4Fe-4S] cluster as cofactor. Dimethylation at Arg-118 by NDUFAF7 takes place after NDUFS2 assembles into the complex I, leading to stabilize the early intermediate complex.

The protein localises to the mitochondrion inner membrane. It catalyses the reaction a ubiquinone + NADH + 5 H(+)(in) = a ubiquinol + NAD(+) + 4 H(+)(out). Its function is as follows. Core subunit of the mitochondrial membrane respiratory chain NADH dehydrogenase (Complex I) which catalyzes electron transfer from NADH through the respiratory chain, using ubiquinone as an electron acceptor. Essential for the catalytic activity and assembly of complex I. Redox-sensitive, critical component of the oxygen-sensing pathway in the pulmonary vasculature which plays a key role in acute pulmonary oxygen-sensing and hypoxic pulmonary vasoconstriction. Plays an important role in carotid body sensing of hypoxia. Essential for glia-like neural stem and progenitor cell proliferation, differentiation and subsequent oligodendrocyte or neuronal maturation. This is NADH dehydrogenase [ubiquinone] iron-sulfur protein 2, mitochondrial (NDUFS2) from Pan troglodytes (Chimpanzee).